The chain runs to 183 residues: Ribosomal RNA small subunit methyltransferase G (183 aa).

S-adenosyl-L-methionine contacts are provided by residues Gly60, Phe65, 111–112 (IE), and Arg125.

Belongs to the methyltransferase superfamily. RNA methyltransferase RsmG family.

It is found in the cytoplasm. It carries out the reaction guanosine(527) in 16S rRNA + S-adenosyl-L-methionine = N(7)-methylguanosine(527) in 16S rRNA + S-adenosyl-L-homocysteine. Functionally, specifically methylates the N7 position of guanine in position 527 of 16S rRNA. This is Ribosomal RNA small subunit methyltransferase G from Campylobacter hominis (strain ATCC BAA-381 / DSM 21671 / CCUG 45161 / LMG 19568 / NCTC 13146 / CH001A).